The following is a 329-amino-acid chain: Ig gamma-2C chain C region (329 aa).

The CH1 stretch occupies residues 1–97; the sequence is ARTTAPSVYP…ATKSNLIKRI (97 aa). Cys27 and Cys82 are joined by a disulfide. The hinge stretch occupies residues 98–113; it reads EPRRPKPRPPTDICSC. The CH2 stretch occupies residues 114–222; sequence DDNLGRPSVF…PIEKTISKPR (109 aa). 2 disulfide bridges follow: Cys143/Cys203 and Cys249/Cys307. A CH3 region spans residues 223 to 329; sequence GKARTPQVYT…QKNLSRSPGK (107 aa).

This Rattus norvegicus (Rat) protein is Ig gamma-2C chain C region.